The primary structure comprises 294 residues: StAR-related lipid transfer protein 3 (294 aa).

Residues 1 to 66 enclose the MENTAL domain; that stretch reads DGYICNNGMD…YSPPESLAGS (66 aa). The short motif at 55–61 is the FFAT element; sequence QFYSPPE. The interval 58-77 is disordered; sequence SPPESLAGSEEDLDEEGLGR. In terms of domain architecture, START spans 79–292; that stretch reads AVSPQEKALV…LRQRIRDLRS (214 aa).

Belongs to the STARD3 family. Homodimer. Phosphorylated. Phosphorylation allows the tethering of two membranes that participates in the formation of ER-endosome contacts. Phosphorylation of FFAT motif drives membrane tethering between the endoplasmic reticulum and late endosomes that in turn allows the efficient transport of sterol mediated by the START domain.

It is found in the late endosome membrane. The catalysed reaction is cholesterol(in) = cholesterol(out). Sterol-binding protein that mediates cholesterol transport from the endoplasmic reticulum to endosomes. The sterol transport mechanism is triggered by phosphorylation of FFAT motif that leads to membrane tethering between the endoplasmic reticulum and late endosomes. Acts as a lipid transfer protein that redirects sterol to the endosome at the expense of the cell membrane and favors membrane formation inside endosomes. This is StAR-related lipid transfer protein 3 from Salvelinus fontinalis (Brook trout).